A 234-amino-acid polypeptide reads, in one-letter code: Glutathione S-transferase U11 (234 aa).

In terms of domain architecture, GST N-terminal spans 11 to 90 (EYVKLLGAWP…YVDETWLSGP (80 aa)). Glutathione contacts are provided by residues 21-22 (SP), 47-48 (LS), 61-62 (QI), and 74-75 (ES). Residues 96-228 (DPFDRAVARF…KLVQFARLKF (133 aa)) form the GST C-terminal domain.

Belongs to the GST superfamily. Tau family.

It is found in the cytoplasm. It localises to the cytosol. The catalysed reaction is RX + glutathione = an S-substituted glutathione + a halide anion + H(+). May be involved in the conjugation of reduced glutathione to a wide number of exogenous and endogenous hydrophobic electrophiles and have a detoxification role against certain herbicides. The chain is Glutathione S-transferase U11 (GSTU11) from Arabidopsis thaliana (Mouse-ear cress).